The sequence spans 103 residues: Small ribosomal subunit protein uS10 (103 aa).

It belongs to the universal ribosomal protein uS10 family. In terms of assembly, part of the 30S ribosomal subunit.

Functionally, involved in the binding of tRNA to the ribosomes. The sequence is that of Small ribosomal subunit protein uS10 from Fusobacterium nucleatum subsp. nucleatum (strain ATCC 25586 / DSM 15643 / BCRC 10681 / CIP 101130 / JCM 8532 / KCTC 2640 / LMG 13131 / VPI 4355).